The following is a 312-amino-acid chain: tRNA uridine(34) hydroxylase (312 aa).

In terms of domain architecture, Rhodanese spans Arg-130–Leu-225. Residue Cys-185 is the Cysteine persulfide intermediate of the active site.

This sequence belongs to the TrhO family.

It catalyses the reaction uridine(34) in tRNA + AH2 + O2 = 5-hydroxyuridine(34) in tRNA + A + H2O. Catalyzes oxygen-dependent 5-hydroxyuridine (ho5U) modification at position 34 in tRNAs. The chain is tRNA uridine(34) hydroxylase from Corynebacterium glutamicum (strain ATCC 13032 / DSM 20300 / JCM 1318 / BCRC 11384 / CCUG 27702 / LMG 3730 / NBRC 12168 / NCIMB 10025 / NRRL B-2784 / 534).